The primary structure comprises 105 residues: ATP synthase F(0) complex subunit a (105 aa).

3 helical membrane-spanning segments follow: residues Glu14–Ile34, Leu47–Met67, and Ala72–Ile92.

The protein belongs to the ATPase A chain family. Component of the ATP synthase complex composed at least of ATP5F1A/subunit alpha, ATP5F1B/subunit beta, ATP5MC1/subunit c (homooctomer), MT-ATP6/subunit a, MT-ATP8/subunit 8, ATP5ME/subunit e, ATP5MF/subunit f, ATP5MG/subunit g, ATP5MK/subunit k, ATP5MJ/subunit j, ATP5F1C/subunit gamma, ATP5F1D/subunit delta, ATP5F1E/subunit epsilon, ATP5PF/subunit F6, ATP5PB/subunit b, ATP5PD/subunit d, ATP5PO/subunit OSCP. ATP synthase complex consists of a soluble F(1) head domain (subunits alpha(3) and beta(3)) - the catalytic core - and a membrane F(0) domain - the membrane proton channel (subunits c, a, 8, e, f, g, k and j). These two domains are linked by a central stalk (subunits gamma, delta, and epsilon) rotating inside the F1 region and a stationary peripheral stalk (subunits F6, b, d, and OSCP). Interacts with DNAJC30; interaction is direct.

The protein resides in the mitochondrion inner membrane. The enzyme catalyses H(+)(in) = H(+)(out). Its function is as follows. Subunit a, of the mitochondrial membrane ATP synthase complex (F(1)F(0) ATP synthase or Complex V) that produces ATP from ADP in the presence of a proton gradient across the membrane which is generated by electron transport complexes of the respiratory chain. ATP synthase complex consist of a soluble F(1) head domain - the catalytic core - and a membrane F(1) domain - the membrane proton channel. These two domains are linked by a central stalk rotating inside the F(1) region and a stationary peripheral stalk. During catalysis, ATP synthesis in the catalytic domain of F(1) is coupled via a rotary mechanism of the central stalk subunits to proton translocation. With the subunit c (ATP5MC1), forms the proton-conducting channel in the F(0) domain, that contains two crucial half-channels (inlet and outlet) that facilitate proton movement from the mitochondrial intermembrane space (IMS) into the matrix. Protons are taken up via the inlet half-channel and released through the outlet half-channel, following a Grotthuss mechanism. The polypeptide is ATP synthase F(0) complex subunit a (Salmo trutta (Brown trout)).